The sequence spans 200 residues: MAGFKQLSGLVVPLDAANVDTDAIIPKQFLQAITRVGFGKHLFHEWRYLDVDGTKPNPEFVLNYPQYQGATILLARKNLGCGSSREHAPWALADYGFKVMIAPSFADIFYNNSLNNHMLPIRLSEEEVEEIFQWVWANDGKQIHVDLEAMTVTVGDKVYHFELDEFRRHCLLNGLDNIGLTLQHEEKISAYEKNIPAFLR.

The protein belongs to the LeuD family. LeuD type 1 subfamily. Heterodimer of LeuC and LeuD.

It carries out the reaction (2R,3S)-3-isopropylmalate = (2S)-2-isopropylmalate. It participates in amino-acid biosynthesis; L-leucine biosynthesis; L-leucine from 3-methyl-2-oxobutanoate: step 2/4. In terms of biological role, catalyzes the isomerization between 2-isopropylmalate and 3-isopropylmalate, via the formation of 2-isopropylmaleate. In Haemophilus influenzae (strain 86-028NP), this protein is 3-isopropylmalate dehydratase small subunit.